The sequence spans 255 residues: Flap endonuclease Xni (255 aa).

Residue Asp-105 participates in Mg(2+) binding. One can recognise a 5'-3' exonuclease domain in the interval 163-253 (QYQMLDFIAL…NLKQFRINPI (91 aa)). 5 residues coordinate K(+): Leu-172, Ala-173, Pro-181, Ile-183, and Ile-186. The interaction with DNA stretch occupies residues 185 to 190 (GIGPKS).

The protein belongs to the Xni family. The cofactor is Mg(2+). Requires K(+) as cofactor.

Its function is as follows. Has flap endonuclease activity. During DNA replication, flap endonucleases cleave the 5'-overhanging flap structure that is generated by displacement synthesis when DNA polymerase encounters the 5'-end of a downstream Okazaki fragment. This chain is Flap endonuclease Xni, found in Shewanella frigidimarina (strain NCIMB 400).